A 56-amino-acid polypeptide reads, in one-letter code: Large ribosomal subunit protein bL32 (56 aa).

A disordered region spans residues 1–40; that stretch reads MAVQQNKKSRSKRGMRRSHDSLGTAQLSVDATSGELHRRH. Basic residues predominate over residues 7-16; the sequence is KKSRSKRGMR. Polar residues predominate over residues 21-31; sequence SLGTAQLSVDA.

It belongs to the bacterial ribosomal protein bL32 family.

This Shewanella halifaxensis (strain HAW-EB4) protein is Large ribosomal subunit protein bL32.